Reading from the N-terminus, the 359-residue chain is Fructose-bisphosphate aldolase, cytoplasmic isozyme 2 (359 aa).

2 residues coordinate substrate: arginine 52 and lysine 143. Catalysis depends on glutamate 184, which acts as the Proton acceptor. Residue lysine 226 is the Schiff-base intermediate with dihydroxyacetone-P of the active site.

This sequence belongs to the class I fructose-bisphosphate aldolase family.

It localises to the cytoplasm. The enzyme catalyses beta-D-fructose 1,6-bisphosphate = D-glyceraldehyde 3-phosphate + dihydroxyacetone phosphate. Its pathway is carbohydrate degradation; glycolysis; D-glyceraldehyde 3-phosphate and glycerone phosphate from D-glucose: step 4/4. The sequence is that of Fructose-bisphosphate aldolase, cytoplasmic isozyme 2 from Pisum sativum (Garden pea).